The sequence spans 526 residues: Probable feruloyl esterase B-2 (526 aa).

Positions 1–19 are cleaved as a signal peptide; it reads MPSLRRLLPFLAAGSAALA. 2 disulfides stabilise this stretch: C28-C75 and C63-C114. 4 N-linked (GlcNAc...) asparagine glycosylation sites follow: N53, N85, N98, and N138. 3 disulfide bridges follow: C187-C441, C256-C273, and C282-C291. S188 (acyl-ester intermediate) is an active-site residue. N-linked (GlcNAc...) asparagine glycosylation is present at N246. Residues D257, D260, A262, D264, and I266 each contribute to the Ca(2+) site. N287 and N311 each carry an N-linked (GlcNAc...) asparagine glycan. Catalysis depends on charge relay system residues D400 and H440. Residues N490 and N516 are each glycosylated (N-linked (GlcNAc...) asparagine). The cysteines at positions 503 and 525 are disulfide-linked.

Belongs to the tannase family.

It localises to the secreted. The catalysed reaction is feruloyl-polysaccharide + H2O = ferulate + polysaccharide.. Involved in degradation of plant cell walls. Hydrolyzes the feruloyl-arabinose ester bond in arabinoxylans as well as the feruloyl-galactose and feruloyl-arabinose ester bonds in pectin. This is Probable feruloyl esterase B-2 (faeB-2) from Aspergillus oryzae (strain ATCC 42149 / RIB 40) (Yellow koji mold).